Consider the following 454-residue polypeptide: tRNA modification GTPase MnmE (454 aa).

Residues R23, E80, and K120 each contribute to the (6S)-5-formyl-5,6,7,8-tetrahydrofolate site. Residues 216–377 (GMKVVIAGRP…LRNHLKQSMG (162 aa)) enclose the TrmE-type G domain. K(+) is bound at residue N226. GTP is bound by residues 226–231 (NAGKSS), 245–251 (TDIAGTT), 270–273 (DTAG), and 335–338 (NKAD). Position 230 (S230) interacts with Mg(2+). T245, I247, and T250 together coordinate K(+). T251 serves as a coordination point for Mg(2+). (6S)-5-formyl-5,6,7,8-tetrahydrofolate is bound at residue K454.

It belongs to the TRAFAC class TrmE-Era-EngA-EngB-Septin-like GTPase superfamily. TrmE GTPase family. As to quaternary structure, homodimer. Heterotetramer of two MnmE and two MnmG subunits. Requires K(+) as cofactor.

It localises to the cytoplasm. In terms of biological role, exhibits a very high intrinsic GTPase hydrolysis rate. Involved in the addition of a carboxymethylaminomethyl (cmnm) group at the wobble position (U34) of certain tRNAs, forming tRNA-cmnm(5)s(2)U34. The sequence is that of tRNA modification GTPase MnmE from Escherichia coli O157:H7.